The chain runs to 425 residues: Dihydroorotase (425 aa).

The Zn(2+) site is built by His59 and His61. Substrate is bound by residues 61 to 63 and Asn93; that span reads HLR. Asp151, His178, and His231 together coordinate Zn(2+). Asn277 lines the substrate pocket. Residue Asp304 coordinates Zn(2+). Asp304 is a catalytic residue. Substrate contacts are provided by residues His308 and 322-323; that span reads FG.

The protein belongs to the metallo-dependent hydrolases superfamily. DHOase family. Class I DHOase subfamily. Zn(2+) is required as a cofactor.

The catalysed reaction is (S)-dihydroorotate + H2O = N-carbamoyl-L-aspartate + H(+). Its pathway is pyrimidine metabolism; UMP biosynthesis via de novo pathway; (S)-dihydroorotate from bicarbonate: step 3/3. In terms of biological role, catalyzes the reversible cyclization of carbamoyl aspartate to dihydroorotate. In Staphylococcus epidermidis (strain ATCC 35984 / DSM 28319 / BCRC 17069 / CCUG 31568 / BM 3577 / RP62A), this protein is Dihydroorotase.